The chain runs to 273 residues: MSHPLIFPDFDPVAFHIGPLAVRWYALAYMVSFIIALPIARRLNRLAPEVATNEQVDDFLFYAILGVLLGGRLGYVLFYRPMDYLSHPLEIFKTWDGGMSFHGGALGVILALAYFSWKTRLSFLAFADRIVPVVPIGLGLGRCANFVNGELWGRPASPDLPWAMIFPTGGPIPRHPSELYEALTEGVLLLCVMLFAASRPQVRERFGFLSGLFLFGYACARSFCEFFRQPDANIGFLSGGTTMGQLLCIPMALAGMGLMVYAMRRPAQVSAHV.

The next 3 membrane-spanning stretches (helical) occupy residues 20–40, 59–79, and 97–117; these read LAVR…LPIA, FLFY…VLFY, and GGMS…YFSW. Position 142 (arginine 142) interacts with a 1,2-diacyl-sn-glycero-3-phospho-(1'-sn-glycerol). A run of 2 helical transmembrane segments spans residues 206 to 226 and 243 to 263; these read FGFL…FCEF and MGQL…VYAM.

It belongs to the Lgt family.

The protein resides in the cell inner membrane. It catalyses the reaction L-cysteinyl-[prolipoprotein] + a 1,2-diacyl-sn-glycero-3-phospho-(1'-sn-glycerol) = an S-1,2-diacyl-sn-glyceryl-L-cysteinyl-[prolipoprotein] + sn-glycerol 1-phosphate + H(+). Its pathway is protein modification; lipoprotein biosynthesis (diacylglyceryl transfer). In terms of biological role, catalyzes the transfer of the diacylglyceryl group from phosphatidylglycerol to the sulfhydryl group of the N-terminal cysteine of a prolipoprotein, the first step in the formation of mature lipoproteins. This chain is Phosphatidylglycerol--prolipoprotein diacylglyceryl transferase, found in Gluconobacter oxydans (strain 621H) (Gluconobacter suboxydans).